Here is a 73-residue protein sequence, read N- to C-terminus: U3-agatoxin-Ao1k (73 aa).

Positions 1–20 (MRTIISLLLLSAMVFAVIEA) are cleaved as a signal peptide. The propeptide occupies 21 to 34 (ISLEEGLQLFEGER). Intrachain disulfides connect C36-C52, C43-C57, C51-C67, and C59-C65. S71 carries the post-translational modification Serine amide.

Belongs to the neurotoxin 07 (Beta/delta-agtx) family. 03 (aga-4) subfamily. Aga sub-subfamily. In terms of tissue distribution, expressed by the venom gland.

It is found in the secreted. In terms of biological role, insecticidal neurotoxin that modulates the insect Nav channel (DmNaV1/tipE (para/tipE)) in a unique manner, with both the activation and inactivation processes being affected. The voltage dependence of activation is shifted toward more hyperpolarized potentials (analogous to site 4 toxins) and a non-inactivating persistent sodium current is induced (site 3-like action). Interestingly, both effects take place in a voltage-dependent manner, producing a bell-shaped curve between -80 and 0 mV. Compared to beta/delta-agatoxin-1 to -3, this toxin appears to affect the insect sodium channel only weakly. In Agelena orientalis (Funnel-web spider), this protein is U3-agatoxin-Ao1k.